The following is a 201-amino-acid chain: Molybdenum cofactor guanylyltransferase (201 aa).

Residues 14–16, Lys-31, and Asp-104 contribute to the GTP site; that span reads LAG. Asp-104 contributes to the Mg(2+) binding site.

The protein belongs to the MobA family. In terms of assembly, monomer. The cofactor is Mg(2+).

Its subcellular location is the cytoplasm. The catalysed reaction is Mo-molybdopterin + GTP + H(+) = Mo-molybdopterin guanine dinucleotide + diphosphate. Transfers a GMP moiety from GTP to Mo-molybdopterin (Mo-MPT) cofactor (Moco or molybdenum cofactor) to form Mo-molybdopterin guanine dinucleotide (Mo-MGD) cofactor. In Helicobacter pylori (strain P12), this protein is Molybdenum cofactor guanylyltransferase.